A 423-amino-acid polypeptide reads, in one-letter code: Adenylosuccinate synthetase (423 aa).

Residues 13 to 19 (GDEGKGK) and 41 to 43 (GHT) contribute to the GTP site. The active-site Proton acceptor is the D14. Residues D14 and G41 each coordinate Mg(2+). IMP is bound by residues 14 to 17 (DEGK), 39 to 42 (NAGH), T130, R144, Q223, T238, and R302. H42 functions as the Proton donor in the catalytic mechanism. Residue 298–304 (SVTGRKR) coordinates substrate. Residues R304 and 410-412 (SVG) contribute to the GTP site.

Belongs to the adenylosuccinate synthetase family. Homodimer. Requires Mg(2+) as cofactor.

It is found in the cytoplasm. It catalyses the reaction IMP + L-aspartate + GTP = N(6)-(1,2-dicarboxyethyl)-AMP + GDP + phosphate + 2 H(+). Its pathway is purine metabolism; AMP biosynthesis via de novo pathway; AMP from IMP: step 1/2. In terms of biological role, plays an important role in the de novo pathway of purine nucleotide biosynthesis. Catalyzes the first committed step in the biosynthesis of AMP from IMP. The sequence is that of Adenylosuccinate synthetase from Porphyromonas gingivalis (strain ATCC BAA-308 / W83).